Here is a 965-residue protein sequence, read N- to C-terminus: MNSAEVNVNPRVFGDSFVTFSGNGSGKFEMIDQAEAFLMELDSVAADTGSDGNGNVDLGSRVSNSETEPRFCEMKREIRDSDHRFYELCNESGEKKMEKRRVPDYKSFLSEFDDYVAREKMGSRNSKALSYGFEVGDMVWGKVKSHPWWPGQIFNEAFASPSVRRVKKMGYVLVAFFGDNSYGWFDPAELIPFEPHVKEKSQQTSSDHFAKAVEEAMNEVGRRSALGLTCKCRNQYNFRPINAQGYFAVDVPDYEVQAIYSSKQIQKARDSFSSVQTLAFVKRCALAPQECDTDSLKSFQKKVAVCAFRRAVFEEFDETYEQAFRARSVYCLMKTHEPLNRAPLRVPLSGSLVSAETLGNPKSYTKAMNVKDSTKQDKYLPKRREEAGDMTVQFGQVQESSQFQGINGSSAWDRLLQRRTPCLQTPRKHEQTGLVSMNFTSSSGNIPGKKSSVSKLSRDDDKGLAQESDVRMGEKATLFPDQEKFEPMKSLKQDETGTNSRSNKSSLKLFSGGKFSAGVGIKKGNVVKRSSGEMKSENCPPEPKKKKKEYVSELNRDTPDKRKALSSGEAWAKKSSQVDSAKRRSNMLIVKLDGLQLLSNLLALSLDPLFGSSDRSSFRVIRQFFFHFRSHVYQKSLATSPSATKLSKSAKTLCRANEQSKAGRNRISSDSQQDVPSTKKLKKTIQFKPLASDKKTNQDATKRSSLAPLNPVRDQCRVPINAKPAIVQQEKKTGPSAMVVEPTMLVMMFPPGESLPSIDLLKARFGRFGQLDQSAIRVSWKSSICRVGFLYKLDAQTALRYVSGSKSLFGNVNVTYFLRDMKASSASGDHELKKAKRPKTDKPITKPLNQLLEQAPPVHQPNIQLKSCLKKPGNNRNGNHRTVRVKFMLGEKETESPFSVSILPLSSQDSEPKPVNNQVDHVEPPLDPSQLKVDISLQMMELLTRCNDAVANVTGLLGYVPYHSL.

The PWWP domain maps to 135–196 (VGDMVWGKVK…PAELIPFEPH (62 aa)). A compositionally biased stretch (polar residues) spans 437–455 (MNFTSSSGNIPGKKSSVSK). Disordered stretches follow at residues 437 to 507 (MNFT…KSSL), 526 to 577 (VVKR…KSSQ), 649 to 708 (SAKT…SLAP), and 905 to 927 (LSSQDSEPKPVNNQVDHVEPPLD). Composition is skewed to basic and acidic residues over residues 456 to 474 (LSRDDDKGLAQESDVRMGE) and 481 to 495 (DQEKFEPMKSLKQDE). Residues 496 to 507 (TGTNSRSNKSSL) show a composition bias toward polar residues. The Nuclear localization signal signature appears at 546–553 (KKKEYVSE). Over residues 549-563 (EYVSELNRDTPDKRK) the composition is skewed to basic and acidic residues. Residues 657 to 676 (NEQSKAGRNRISSDSQQDVP) are compositionally biased toward polar residues. A compositionally biased stretch (basic and acidic residues) spans 691 to 702 (ASDKKTNQDATK). The span at 905–919 (LSSQDSEPKPVNNQV) shows a compositional bias: polar residues.

It belongs to the PDP family. As to quaternary structure, component of the PRC2 (polycomb repressive complex 2) complex which regulates histone methylation on histone H3K27.

The protein resides in the nucleus. May influence gene expression by regulating the function of the PRC2 complex and modulating H3K27me3 level. In Arabidopsis thaliana (Mouse-ear cress), this protein is PWWP domain-containing protein 4.